A 100-amino-acid chain; its full sequence is Urease subunit gamma (100 aa).

The protein belongs to the urease gamma subunit family. Heterotrimer of UreA (gamma), UreB (beta) and UreC (alpha) subunits. Three heterotrimers associate to form the active enzyme.

The protein localises to the cytoplasm. The enzyme catalyses urea + 2 H2O + H(+) = hydrogencarbonate + 2 NH4(+). The protein operates within nitrogen metabolism; urea degradation; CO(2) and NH(3) from urea (urease route): step 1/1. The polypeptide is Urease subunit gamma (Mycolicibacterium vanbaalenii (strain DSM 7251 / JCM 13017 / BCRC 16820 / KCTC 9966 / NRRL B-24157 / PYR-1) (Mycobacterium vanbaalenii)).